A 620-amino-acid polypeptide reads, in one-letter code: MALLQIAEPGLTAAPHQHRLAVGIDLGTTNSLVAAVRSGVANTLADESAQHSLPSVVRYTQDSVFVGREAEAFSAQDPQNTIISVKRFMGRSLDDIQSGSQTFPYIFEASDNGLPIFITPQGKVNPIQVSADILKPLVERAESTLGGTLEGVVITVPAYFDDAQRQGTKEAAALVGVKVLRLLNEPTAAAIAYGLDSGQEGVIAVYDLGGGTFDISILRLNKGVFEVLATGGDSALGGDDFDHMLQAHFQQQWSLDEVSAGLSRMLLIEARKVKEALTDSDNTTANVTDDNGNVLSLNVSRATFDEMISKLVKKTVSSCRRALRDAGVSTDEVIETVMVGGSTRVPLVRGEVANFFGKTPLTSIDPDRVVAIGAAIQADILVGNKPDSDLLLLDVIPLSLGIETMGGLVEKVVARNTTIPVARAQEFTTFKDGQTAMAFHVVQGERELVADCRSLARFTLNGIPPLAAGAAHIRVTFQVDADGLLSVTAMEKSTGVKTTIQVKPSFGLSDAEIGSMLKDSMANAKEDISRRMLAEKQVEAARVLESLSAALNKDGQLLAANELSAIQGAMALLAQLAEEKDTDAIEDAIEALDTATQDFAAKRMDNSIKLALKGQSVDNI.

The protein belongs to the heat shock protein 70 family.

Functionally, chaperone involved in the maturation of iron-sulfur cluster-containing proteins. Has a low intrinsic ATPase activity which is markedly stimulated by HscB. The sequence is that of Chaperone protein HscA homolog from Shewanella piezotolerans (strain WP3 / JCM 13877).